The primary structure comprises 312 residues: Pre-mRNA-splicing factor 38A (312 aa).

The N-terminal protein interaction domain stretch occupies residues 1-179 (MANRTVKDAH…VLEETEQLDP (179 aa)). Positions 180–312 (RVSALEEDMD…SHKKSRRGNE (133 aa)) are disordered. The segment covering 184 to 201 (LEEDMDDVESSEEEEDDD) has biased composition (acidic residues). The segment covering 202–223 (EKGRDPSPEHHRRNYRDLDRPR) has biased composition (basic and acidic residues). Basic residues-rich tracts occupy residues 224–294 (RSPS…RSHS) and 301–312 (KKSHKKSRRGNE).

The protein belongs to the PRP38 family. Component of the spliceosome B complex.

The protein localises to the nucleus. Involved in pre-mRNA splicing as a component of the spliceosome. The protein is Pre-mRNA-splicing factor 38A (prpf38a) of Xenopus laevis (African clawed frog).